Here is a 382-residue protein sequence, read N- to C-terminus: MDIASSSLSQAHKVVLTRQPSSRVNTCSLGSVSAIGFSLPQISSPALGKCRRKQSSSGFVKACVAVEQKTRTAIIRIGTRGSPLALAQAYETREKLKKKHPELVEDGAIHIEIIKTTGDKILSQPLADIGGKGLFTKEIDEALINGHIDIAVHSMKDVPTYLPEKTILPCNLPREDVRDAFICLTAATLAELPAGSVVGTASLRRKSQILHKYPALHVEENFRGNVQTRLSKLQGGKVQATLLALAGLKRLSMTENVASILSLDEMLPAVAQGAIGIACRTDDDKMATYLASLNHEETRLAISCERAFLETLDGSCRTPIAGYASKDEEGNCIFRGLVASPDGTKVLETSRKGPYVYEDMVKMGKDAGQELLSRAGPGFFGN.

The transit peptide at 1–62 (MDIASSSLSQ…KQSSSGFVKA (62 aa)) directs the protein to the chloroplast. Dipyrromethane is bound by residues arginine 80 and serine 82. Phosphoserine is present on serine 123. Residues 156–157 (KD), 200–206 (TASLRRK), and 223–229 (RGNVQTR) contribute to the dipyrromethane site. Catalysis depends on aspartate 157, which acts as the Proton donor/acceptor. Position 316 is an S-(dipyrrolylmethanemethyl)cysteine (cysteine 316).

Belongs to the HMBS family. Monomer. Dipyrromethane serves as cofactor.

It localises to the plastid. The protein localises to the chloroplast. The catalysed reaction is 4 porphobilinogen + H2O = hydroxymethylbilane + 4 NH4(+). It participates in porphyrin-containing compound metabolism; protoporphyrin-IX biosynthesis; coproporphyrinogen-III from 5-aminolevulinate: step 2/4. It functions in the pathway porphyrin-containing compound metabolism; chlorophyll biosynthesis. Inhibited by NH(3), heavy-metal ions, hydroxylamine and 2-bromoporphobilinogen. Not inhibited by N-ethylmaleimide. In terms of biological role, tetrapolymerization of the monopyrrole PBG into the hydroxymethylbilane pre-uroporphyrinogen in several discrete steps. The chain is Porphobilinogen deaminase, chloroplastic (HEMC) from Arabidopsis thaliana (Mouse-ear cress).